We begin with the raw amino-acid sequence, 138 residues long: Basic phospholipase A2 Sct-N6 (138 aa).

The N-terminal stretch at 1-16 (MRTFWIVAVLLVGVEG) is a signal peptide. 7 cysteine pairs are disulfide-bonded: cysteine 42–cysteine 131, cysteine 44–cysteine 60, cysteine 59–cysteine 111, cysteine 65–cysteine 138, cysteine 66–cysteine 104, cysteine 73–cysteine 97, and cysteine 91–cysteine 102. The Ca(2+) site is built by tyrosine 43, glycine 45, and glycine 47. Histidine 63 is a catalytic residue. Aspartate 64 provides a ligand contact to Ca(2+). Aspartate 105 is an active-site residue.

It belongs to the phospholipase A2 family. Group II subfamily. D49 sub-subfamily. It depends on Ca(2+) as a cofactor. As to expression, expressed by the venom gland.

It localises to the secreted. The enzyme catalyses a 1,2-diacyl-sn-glycero-3-phosphocholine + H2O = a 1-acyl-sn-glycero-3-phosphocholine + a fatty acid + H(+). In terms of biological role, snake venom phospholipase A2 (PLA2) that displays edema-inducing activities, as well as presynaptic neurotoxicity and low myotoxicity. PLA2 catalyzes the calcium-dependent hydrolysis of the 2-acyl groups in 3-sn-phosphoglycerides. In Sistrurus tergeminus (Western massasauga), this protein is Basic phospholipase A2 Sct-N6.